We begin with the raw amino-acid sequence, 334 residues long: Myo-inositol 2-dehydrogenase (334 aa).

The protein belongs to the Gfo/Idh/MocA family.

It carries out the reaction myo-inositol + NAD(+) = scyllo-inosose + NADH + H(+). It participates in polyol metabolism; myo-inositol metabolism. Functionally, catalyzes the NAD(+)-dependent oxidation of myo-inositol (MI) to 2-keto-myo-inositol (scyllo-inosose), and thus probably functions in a myo-inositol degradation pathway together with IolM, IolN and IolO. Has no activity with scyllo-inositol and much reduced activity (78-fold lower catalytic efficiency) with 1D-chiro-inositol. The protein is Myo-inositol 2-dehydrogenase of Thermotoga maritima (strain ATCC 43589 / DSM 3109 / JCM 10099 / NBRC 100826 / MSB8).